A 105-amino-acid polypeptide reads, in one-letter code: ATP-dependent Clp protease adapter protein ClpS (105 aa).

The protein belongs to the ClpS family. Binds to the N-terminal domain of the chaperone ClpA.

In terms of biological role, involved in the modulation of the specificity of the ClpAP-mediated ATP-dependent protein degradation. This is ATP-dependent Clp protease adapter protein ClpS from Prochlorococcus marinus (strain MIT 9515).